A 524-amino-acid polypeptide reads, in one-letter code: FAD-dependent monooxygenase opdD (524 aa).

2 residues coordinate FAD: Glu-48 and Arg-145.

The protein belongs to the paxM FAD-dependent monooxygenase family.

It functions in the pathway secondary metabolite biosynthesis. Its function is as follows. FAD-dependent monooxygenase; part of the gene cluster that mediates the biosynthesis of oxopyrrolidines, polyketide-amino acid hybrid compounds with feature structures of tetramic acid. Does not seem to play a role in oxopyrrolidines A and B biosynthesis. May be involved in further modifications of these oxopyrrolidines. The polypeptide is FAD-dependent monooxygenase opdD (Penicillium oxalicum (strain 114-2 / CGMCC 5302) (Penicillium decumbens)).